Here is a 288-residue protein sequence, read N- to C-terminus: Glucose-1-phosphate thymidylyltransferase (288 aa).

Residue glycine 8 coordinates dTDP-alpha-D-glucose. Glycine 8, glycine 11, threonine 12, arginine 13, lysine 23, glutamine 24, glutamine 80, glycine 85, and aspartate 108 together coordinate dTTP. Positions 23, 24, 80, 85, 108, 109, 143, 158, 159, 169, and 222 each coordinate dTDP-alpha-D-glucose. Residue aspartate 108 coordinates Mg(2+). Aspartate 222 lines the Mg(2+) pocket.

It belongs to the glucose-1-phosphate thymidylyltransferase family. Mg(2+) serves as cofactor.

It carries out the reaction dTTP + alpha-D-glucose 1-phosphate + H(+) = dTDP-alpha-D-glucose + diphosphate. It functions in the pathway carbohydrate biosynthesis; dTDP-L-rhamnose biosynthesis. Its function is as follows. Catalyzes the conversion of glucose-1-phosphate and dTTP to dTDP-glucose and pyrophosphate. Involved in the biosynthesis of the dTDP-L-rhamnose which is a component of the critical linker, D-N-acetylglucosamine-L-rhamnose disaccharide, which connects the galactan region of arabinogalactan to peptidoglycan via a phosphodiester linkage. This Mycolicibacterium smegmatis (strain ATCC 700084 / mc(2)155) (Mycobacterium smegmatis) protein is Glucose-1-phosphate thymidylyltransferase (rmlA).